Here is a 410-residue protein sequence, read N- to C-terminus: UDP-N-acetylglucosamine--N-acetylmuramyl-(pentapeptide) pyrophosphoryl-undecaprenol N-acetylglucosamine transferase (410 aa).

Residues 1–34 are disordered; it reads MKDTVSQPAGGRGATAPRPADAASPSCGSSPSAD. Positions 14-34 are enriched in low complexity; the sequence is ATAPRPADAASPSCGSSPSAD. Residues 45 to 47, Asn167, Arg204, Ser238, and Gln334 contribute to the UDP-N-acetyl-alpha-D-glucosamine site; that span reads TAG.

It belongs to the glycosyltransferase 28 family. MurG subfamily.

It is found in the cell membrane. The enzyme catalyses di-trans,octa-cis-undecaprenyl diphospho-N-acetyl-alpha-D-muramoyl-L-alanyl-D-glutamyl-meso-2,6-diaminopimeloyl-D-alanyl-D-alanine + UDP-N-acetyl-alpha-D-glucosamine = di-trans,octa-cis-undecaprenyl diphospho-[N-acetyl-alpha-D-glucosaminyl-(1-&gt;4)]-N-acetyl-alpha-D-muramoyl-L-alanyl-D-glutamyl-meso-2,6-diaminopimeloyl-D-alanyl-D-alanine + UDP + H(+). The protein operates within cell wall biogenesis; peptidoglycan biosynthesis. Cell wall formation. Catalyzes the transfer of a GlcNAc subunit on undecaprenyl-pyrophosphoryl-MurNAc-pentapeptide (lipid intermediate I) to form undecaprenyl-pyrophosphoryl-MurNAc-(pentapeptide)GlcNAc (lipid intermediate II). In Mycobacterium bovis (strain ATCC BAA-935 / AF2122/97), this protein is UDP-N-acetylglucosamine--N-acetylmuramyl-(pentapeptide) pyrophosphoryl-undecaprenol N-acetylglucosamine transferase.